The primary structure comprises 159 residues: 2-C-methyl-D-erythritol 2,4-cyclodiphosphate synthase (159 aa).

Positions 8 and 10 each coordinate a divalent metal cation. 4-CDP-2-C-methyl-D-erythritol 2-phosphate is bound by residues 8–10 (DVH) and 34–35 (HS). H42 contributes to the a divalent metal cation binding site. Residues 56–58 (DIG), 61–65 (FPDTD), 100–106 (AQAPRML), 132–135 (TTTE), F139, and R142 each bind 4-CDP-2-C-methyl-D-erythritol 2-phosphate.

It belongs to the IspF family. As to quaternary structure, homotrimer. A divalent metal cation serves as cofactor.

The catalysed reaction is 4-CDP-2-C-methyl-D-erythritol 2-phosphate = 2-C-methyl-D-erythritol 2,4-cyclic diphosphate + CMP. Its pathway is isoprenoid biosynthesis; isopentenyl diphosphate biosynthesis via DXP pathway; isopentenyl diphosphate from 1-deoxy-D-xylulose 5-phosphate: step 4/6. In terms of biological role, involved in the biosynthesis of isopentenyl diphosphate (IPP) and dimethylallyl diphosphate (DMAPP), two major building blocks of isoprenoid compounds. Catalyzes the conversion of 4-diphosphocytidyl-2-C-methyl-D-erythritol 2-phosphate (CDP-ME2P) to 2-C-methyl-D-erythritol 2,4-cyclodiphosphate (ME-CPP) with a corresponding release of cytidine 5-monophosphate (CMP). The polypeptide is 2-C-methyl-D-erythritol 2,4-cyclodiphosphate synthase (Escherichia coli O6:K15:H31 (strain 536 / UPEC)).